The chain runs to 240 residues: MSLGIKEHPDAEVQKNRVLTLDDWQDKWVTRHIAFHQEQGHQLLKKHFDTFLKGQSGLRVFFPLCGKAIEMKWFADRGHTVVGVEISEIGIREFFAEQNLSYTEEPLTEIAGAKVFKSSSGNISLYCCSIFDLPRANIGKFDRIWDRGALVAVNPGDRDRYADIILSLLRKGYHYLLVVLSYDPTKHTGPPFYVPDAELKKLFGTKCNMQCLEEVDALEERHKTWGVDYFFEKLYLLTEK.

An S-adenosyl-L-methionine-binding site is contributed by 24-35 (WQDKWVTRHIAF). F35 serves as a coordination point for substrate. The residue at position 53 (K53) is an N6-acetyllysine. S-adenosyl-L-methionine is bound by residues L64, E85, 129 to 130 (SI), and R147.

Belongs to the class I-like SAM-binding methyltransferase superfamily. TPMT family. As to quaternary structure, monomer.

The protein localises to the cytoplasm. The catalysed reaction is S-adenosyl-L-methionine + a thiopurine = S-adenosyl-L-homocysteine + a thiopurine S-methylether.. It catalyses the reaction mercaptopurine + S-adenosyl-L-methionine = 6-methylthiopurine + S-adenosyl-L-homocysteine + H(+). Its function is as follows. Catalyzes the S-methylation of thiopurine drugs such as 6-mercaptopurine (also called mercaptopurine, 6-MP or its brand name Purinethol) using S-adenosyl-L-methionine as the methyl donor. TPMT activity modulates the cytotoxic effects of thiopurine prodrugs. A natural substrate for this enzyme has yet to be identified. The protein is Thiopurine S-methyltransferase (Tpmt) of Rattus norvegicus (Rat).